Consider the following 330-residue polypeptide: NADH-quinone oxidoreductase subunit H (330 aa).

The next 9 helical transmembrane spans lie at 5-25 (LFFI…IACL), 44-64 (IGPD…MIKL), 78-98 (FIFL…LAPI), 122-142 (VLYV…AGLA), 156-176 (VMGL…VIMI), 192-212 (IFGW…MASF), 240-260 (MRWA…SIVI), 271-293 (FWFV…FFLW), and 310-330 (CWKI…IALI).

The protein belongs to the complex I subunit 1 family. As to quaternary structure, NDH-1 is composed of 14 different subunits. Subunits NuoA, H, J, K, L, M, N constitute the membrane sector of the complex.

Its subcellular location is the cell inner membrane. It catalyses the reaction a quinone + NADH + 5 H(+)(in) = a quinol + NAD(+) + 4 H(+)(out). In terms of biological role, NDH-1 shuttles electrons from NADH, via FMN and iron-sulfur (Fe-S) centers, to quinones in the respiratory chain. The immediate electron acceptor for the enzyme in this species is believed to be ubiquinone. Couples the redox reaction to proton translocation (for every two electrons transferred, four hydrogen ions are translocated across the cytoplasmic membrane), and thus conserves the redox energy in a proton gradient. This subunit may bind ubiquinone. This is NADH-quinone oxidoreductase subunit H from Campylobacter curvus (strain 525.92).